The following is a 416-amino-acid chain: CapZ-interacting protein (416 aa).

Disordered regions lie at residues 1–84 and 98–416; these read MEER…KSSP and AALL…DTKM. The span at 8–20 shows a compositional bias: polar residues; the sequence is TNANVDNSASPSV. Residue Ser-17 is modified to Phosphoserine. Position 68 is a phosphoserine; by MAPK8; in vitro (Ser-68). Ser-82 carries the post-translational modification Phosphoserine. Residue Ser-83 is modified to Phosphoserine; by MAPK8; in vitro. Ser-105 is subject to Phosphoserine. A Phosphoserine; by MAPK12 and MAPK13 modification is found at Ser-108. 3 positions are modified to phosphoserine: Ser-116, Ser-120, and Ser-123. Residue Thr-124 is modified to Phosphothreonine. Phosphoserine is present on residues Ser-126, Ser-127, Ser-135, and Ser-143. Over residues 159 to 176 the composition is skewed to basic residues; it reads VRTRGSIKRRPPSRRFRR. A Phosphoserine modification is found at Ser-177. A Phosphoserine; by MAPKAPK2 and MAPKAPK3 modification is found at Ser-179. Ser-216 bears the Phosphoserine; by MAPK8; in vitro mark. The region spanning 227 to 330 is the RCSD domain; the sequence is GVRTLGPAEK…RVQNEEVGPE (104 aa). Ser-244 carries the phosphoserine; by MAPKAPK2 or MAPKAPK3; in vitro modification. A compositionally biased stretch (basic and acidic residues) spans 244–273; the sequence is SRTEKQEEDRATEEAKNGEKARRSSEEVDG. 5 positions are modified to phosphoserine: Ser-267, Ser-268, Ser-284, Ser-298, and Ser-333. Basic and acidic residues predominate over residues 292–349; the sequence is AENRCGSPREEKPAGEEAEMEKATEVKGERVQNEEVGPEHDSQETKKLEEGAAVKETP. Thr-336 carries the phosphothreonine modification. At Ser-351 the chain carries Phosphoserine. Residues 360–372 show a composition bias toward basic and acidic residues; the sequence is DVPKQEKGKEKQQ. A compositionally biased stretch (polar residues) spans 382-397; the sequence is SPQTGPAQLETSSEVQ.

As to quaternary structure, interacts with CAPZA2 and CAPZB. In terms of processing, dephosphorylation results in its dissociation from CAPZA2. As to expression, highly expressed in skeletal muscle and more weakly in cardiac muscle. Also expressed in several lymphoid organs, including spleen, thymus, peripheral blood leukocytes, lymph node and bone marrow.

Functionally, stress-induced phosphorylation of CAPZIP may regulate the ability of F-actin-capping protein to remodel actin filament assembly. This chain is CapZ-interacting protein (RCSD1), found in Homo sapiens (Human).